Reading from the N-terminus, the 234-residue chain is Sugar fermentation stimulation protein homolog (234 aa).

It belongs to the SfsA family.

The polypeptide is Sugar fermentation stimulation protein homolog (Shewanella piezotolerans (strain WP3 / JCM 13877)).